The primary structure comprises 220 residues: Small ribosomal subunit protein uS3c (220 aa).

The region spanning 39–120 (IRDFIKNYVK…KLIIDIIRIT (82 aa)) is the KH type-2 domain.

This sequence belongs to the universal ribosomal protein uS3 family. As to quaternary structure, part of the 30S ribosomal subunit.

The protein localises to the plastid. The polypeptide is Small ribosomal subunit protein uS3c (rps3) (Epifagus virginiana (Beechdrops)).